We begin with the raw amino-acid sequence, 305 residues long: MDLEMMLDEDYKEGICLIDFSQIALSTALVNFPDKEKINLSMVRHLILNSIKFNVKKAKTLGYTKIVLCIDNAKSGYWRRDFAYYYKKNRGKAREESTWDWEGYFESSHKVIDELKAYMPYIVMDIDKYEADDHIAVLVKKFSLEGHKILIISSDGDFTQLHKYPNVKQWSPMHKKWVKIKSGSAEIDCMTKILKGDKKDNVASVKVRSDFWFTRVEGERTPSMKTSIVEAIANDREQAKVLLTESEYNRYKENLVLIDFDYIPDNIASNIVNYYNSYKLPPRGKIYSYFVKAGLSKLTNSINEF.

It catalyses the reaction Endonucleolytic cleavage to 5'-phosphomonoester.. Its function is as follows. Plays essential roles in DNA replication by removing the RNA primers from lagging strand fragments. Exhibits 5'to 3' exonuclease activity on either RNA/DNA or DNA/DNA duplexes and endonuclease activity on either flap or fork DNA structures. This is Ribonuclease H (rnh) from Enterobacteria phage T4 (Bacteriophage T4).